The chain runs to 227 residues: (S)-2-haloacid dehalogenase (227 aa).

The active-site Nucleophile is the Asp10. An (S)-2-haloacid-binding positions include 11-12 (LY), Arg41, and 118-119 (SN). Residues 175–180 (SSNAWD) form an important for catalytic activity region.

This sequence belongs to the HAD-like hydrolase superfamily. S-2-haloalkanoic acid dehalogenase family. Homotetramer.

It catalyses the reaction an (S)-2-haloacid + H2O = a (2R)-2-hydroxycarboxylate + a halide anion + H(+). The catalysed reaction is (S)-2-chloropropanoate + H2O = (R)-lactate + chloride + H(+). In terms of biological role, catalyzes the hydrolytic dehalogenation of small (S)-2-haloalkanoic acids to yield the corresponding (R)-2-hydroxyalkanoic acids. Acts on acids of short chain lengths, C(2) to C(4), with inversion of configuration at C-2. Active with 2-halogenated carboxylic acids and converts only the S-isomer (or L-isomer) of 2-chloropropionic acid with inversion of configuration to produce R-lactate (or D-isomer). The protein is (S)-2-haloacid dehalogenase of Pseudomonas putida (Arthrobacter siderocapsulatus).